A 285-amino-acid polypeptide reads, in one-letter code: Polyamine aminopropyltransferase (285 aa).

The PABS domain maps to 5–241; sequence DNWYIEHFQP…GWWSVTMASK (237 aa). Gln-35 serves as a coordination point for S-methyl-5'-thioadenosine. Spermidine is bound by residues His-66 and Asp-90. S-methyl-5'-thioadenosine-binding positions include Asp-110 and 141 to 142; that span reads DG. The Proton acceptor role is filled by Asp-160. 160–163 serves as a coordination point for spermidine; it reads DSTD. Pro-167 serves as a coordination point for S-methyl-5'-thioadenosine.

Belongs to the spermidine/spermine synthase family. In terms of assembly, homodimer or homotetramer.

It is found in the cytoplasm. The enzyme catalyses S-adenosyl 3-(methylsulfanyl)propylamine + putrescine = S-methyl-5'-thioadenosine + spermidine + H(+). The protein operates within amine and polyamine biosynthesis; spermidine biosynthesis; spermidine from putrescine: step 1/1. In terms of biological role, catalyzes the irreversible transfer of a propylamine group from the amino donor S-adenosylmethioninamine (decarboxy-AdoMet) to putrescine (1,4-diaminobutane) to yield spermidine. This chain is Polyamine aminopropyltransferase, found in Xanthomonas axonopodis pv. citri (strain 306).